The primary structure comprises 682 residues: Potassium-transporting ATPase ATP-binding subunit (682 aa).

4 helical membrane passes run proline 34–alanine 54, alanine 62–alanine 82, isoleucine 219–leucine 239, and valine 254–isoleucine 274. Aspartate 307 (4-aspartylphosphate intermediate) is an active-site residue. Residues aspartate 344, glutamate 348, phenylalanine 377–serine 384, and lysine 395 contribute to the ATP site. 2 residues coordinate Mg(2+): aspartate 518 and aspartate 522. 3 helical membrane-spanning segments follow: residues phenylalanine 588–methionine 608, alanine 616–leucine 636, and isoleucine 656–leucine 676.

The protein belongs to the cation transport ATPase (P-type) (TC 3.A.3) family. Type IA subfamily. In terms of assembly, the system is composed of three essential subunits: KdpA, KdpB and KdpC.

It localises to the cell inner membrane. It catalyses the reaction K(+)(out) + ATP + H2O = K(+)(in) + ADP + phosphate + H(+). Its function is as follows. Part of the high-affinity ATP-driven potassium transport (or Kdp) system, which catalyzes the hydrolysis of ATP coupled with the electrogenic transport of potassium into the cytoplasm. This subunit is responsible for energy coupling to the transport system and for the release of the potassium ions to the cytoplasm. The chain is Potassium-transporting ATPase ATP-binding subunit from Shigella boydii serotype 4 (strain Sb227).